The following is a 354-amino-acid chain: CX3C chemokine receptor 1 (354 aa).

Residues 1-32 (MSTSFPELDLENFEYDDSAEACYLGDIVAFGT) lie on the Extracellular side of the membrane. The helical transmembrane segment at 33-60 (IFLSVFYALVFTFGLVGNLLVVLALTNS) threads the bilayer. Over 61–70 (RKPKSITDIY) the chain is Cytoplasmic. Residues 71 to 91 (LLNLALSDLLFVATLPFWTHY) traverse the membrane as a helical segment. At 92–104 (LISHEGLHNAMCK) the chain is on the extracellular side. Cysteines 103 and 176 form a disulfide. The chain crosses the membrane as a helical span at residues 105 to 126 (LTTAFFFIGFFGGIFFITVISI). Topologically, residues 127–143 (DRYLAIVLAANSMNNRT) are cytoplasmic. A helical transmembrane segment spans residues 144–168 (VQHGVTISLGVWAAAILVASPQFMF). Residues 169-196 (TKRKDNECLGDYPEVLQEMWPVLRNSEV) are Extracellular-facing. A helical transmembrane segment spans residues 197 to 216 (NILGFALPLLIMSFCYFRII). Topologically, residues 217–232 (QTLFSCKNRKKARAVR) are cytoplasmic. A helical transmembrane segment spans residues 233 to 257 (LILLVVFAFFLFWTPYNIMIFLETL). Topologically, residues 258-274 (KFYNFFPSCDMKRDLRL) are extracellular. A helical transmembrane segment spans residues 275–298 (ALSVTETVAFSHCCLNPFIYAFAG). The Cytoplasmic portion of the chain corresponds to 299-354 (EKFRRYLGHLYRKCLAVLCGHPVHTGFSPESQRSRQDSILSSFTHYTSEGDGSLLL). Residue T345 is modified to Phosphothreonine.

It belongs to the G-protein coupled receptor 1 family. As to quaternary structure, found in a ternary complex with CX3CL1 and ITGAV:ITGB3 or ITGA4:ITGB1. Post-translationally, this protein is not N-glycosylated which is unusual for G-protein-coupled receptors. As to expression, specifically expressed in subsets of leukocytes: expressed in monocytes, subsets of T-cells and natural killer (NK) cells in the circulation, dendritic cells, as well as in microglia in the central nervous system (CNS). Expression level subdivides blood monocytes into two major functional subsets; CD14(+)CD16(-)-CX3CR1(low) inflammatory monocytes and CD14(low)CD16(+)CX3CR1(high) homeostatic monocytes. Expressed in myeloid-derived mucosal dendritic cells, which populate the entire lamina propria of the small intestine.

The protein localises to the cell membrane. Its function is as follows. Receptor for the C-X3-C chemokine fractalkine (CX3CL1) present on many early leukocyte cells; CX3CR1-CX3CL1 signaling exerts distinct functions in different tissue compartments, such as immune response, inflammation, cell adhesion and chemotaxis. CX3CR1-CX3CL1 signaling mediates cell migratory functions. Responsible for the recruitment of natural killer (NK) cells to inflamed tissues. Acts as a regulator of inflammation process leading to atherogenesis by mediating macrophage and monocyte recruitment to inflamed atherosclerotic plaques, promoting cell survival. Involved in airway inflammation by promoting interleukin 2-producing T helper (Th2) cell survival in inflamed lung. Involved in the migration of circulating monocytes to non-inflamed tissues, where they differentiate into macrophages and dendritic cells. Acts as a negative regulator of angiogenesis, probably by promoting macrophage chemotaxis. Plays a key role in brain microglia by regulating inflammatory response in the central nervous system (CNS) and regulating synapse maturation. Required to restrain the microglial inflammatory response in the CNS and the resulting parenchymal damage in response to pathological stimuli. Involved in brain development by participating in synaptic pruning, a natural process during which brain microglia eliminates extra synapses during postnatal development. Synaptic pruning by microglia is required to promote the maturation of circuit connectivity during brain development. Acts as an important regulator of the gut microbiota by controlling immunity to intestinal bacteria and fungi. Expressed in lamina propria dendritic cells in the small intestine, which form transepithelial dendrites capable of taking up bacteria in order to provide defense against pathogenic bacteria. Required to initiate innate and adaptive immune responses against dissemination of commensal fungi (mycobiota) component of the gut: expressed in mononuclear phagocytes (MNPs) and acts by promoting induction of antifungal IgG antibodies response to confer protection against disseminated C.albicans or C.auris infection. Also acts as a receptor for C-C motif chemokine CCL26, inducing cell chemotaxis. This Mus musculus (Mouse) protein is CX3C chemokine receptor 1.